Consider the following 252-residue polypeptide: Trans-aconitate 2-methyltransferase (252 aa).

This sequence belongs to the methyltransferase superfamily. Tam family.

Its subcellular location is the cytoplasm. The catalysed reaction is trans-aconitate + S-adenosyl-L-methionine = (E)-3-(methoxycarbonyl)pent-2-enedioate + S-adenosyl-L-homocysteine. Functionally, catalyzes the S-adenosylmethionine monomethyl esterification of trans-aconitate. The sequence is that of Trans-aconitate 2-methyltransferase from Escherichia coli O1:K1 / APEC.